Consider the following 263-residue polypeptide: 4-hydroxy-2-oxo-heptane-1,7-dioate aldolase (263 aa).

The Proton acceptor role is filled by histidine 45. Substrate is bound at residue glutamine 147. Residue glutamate 149 participates in a divalent metal cation binding. Alanine 174 and aspartate 175 together coordinate substrate. Aspartate 175 provides a ligand contact to a divalent metal cation.

This sequence belongs to the HpcH/HpaI aldolase family. Homohexamer; trimer of dimers. It depends on a divalent metal cation as a cofactor.

It catalyses the reaction 4-hydroxy-2-oxoheptanedioate = succinate semialdehyde + pyruvate. Its pathway is aromatic compound metabolism; 4-hydroxyphenylacetate degradation; pyruvate and succinate semialdehyde from 4-hydroxyphenylacetate: step 7/7. In terms of biological role, catalyzes the reversible retro-aldol cleavage of 4-hydroxy-2-ketoheptane-1,7-dioate (HKHD) to pyruvate and succinic semialdehyde. The chain is 4-hydroxy-2-oxo-heptane-1,7-dioate aldolase from Salmonella arizonae (strain ATCC BAA-731 / CDC346-86 / RSK2980).